A 405-amino-acid polypeptide reads, in one-letter code: Argininosuccinate synthase (405 aa).

ATP is bound by residues 10–18 and alanine 37; that span reads AYSGGLDTS. Residues tyrosine 88 and serine 93 each contribute to the L-citrulline site. Position 118 (glycine 118) interacts with ATP. 3 residues coordinate L-aspartate: threonine 120, asparagine 124, and aspartate 125. Residue asparagine 124 participates in L-citrulline binding. L-citrulline-binding residues include arginine 128, serine 179, serine 188, glutamate 264, and tyrosine 276.

The protein belongs to the argininosuccinate synthase family. Type 1 subfamily. As to quaternary structure, homotetramer.

The protein localises to the cytoplasm. The enzyme catalyses L-citrulline + L-aspartate + ATP = 2-(N(omega)-L-arginino)succinate + AMP + diphosphate + H(+). The protein operates within amino-acid biosynthesis; L-arginine biosynthesis; L-arginine from L-ornithine and carbamoyl phosphate: step 2/3. The protein is Argininosuccinate synthase of Pseudomonas fluorescens (strain Pf0-1).